Reading from the N-terminus, the 317-residue chain is R2-like ligand binding oxidase (317 aa).

The Mn(2+) site is built by E73, E106, and H109. Residues 76–167 constitute a cross-link (3-(O4'-tyrosyl)-valine (Val-Tyr)); the sequence is VTQDLQPFMA…ANQVRASVTY (92 aa). Residue E106 participates in Fe cation binding. Fe cation-binding residues include E172, E207, and H210.

This sequence belongs to the ribonucleoside diphosphate reductase small chain family. R2-like ligand binding oxidase subfamily. Homodimer. Fe cation serves as cofactor. The cofactor is Mn(2+).

Probable oxidase. The sequence is that of R2-like ligand binding oxidase from Saccharopolyspora erythraea (strain ATCC 11635 / DSM 40517 / JCM 4748 / NBRC 13426 / NCIMB 8594 / NRRL 2338).